We begin with the raw amino-acid sequence, 429 residues long: Histidine--tRNA ligase (429 aa).

The protein belongs to the class-II aminoacyl-tRNA synthetase family. In terms of assembly, homodimer.

The protein localises to the cytoplasm. The enzyme catalyses tRNA(His) + L-histidine + ATP = L-histidyl-tRNA(His) + AMP + diphosphate + H(+). This is Histidine--tRNA ligase from Streptococcus pneumoniae serotype 4 (strain ATCC BAA-334 / TIGR4).